Reading from the N-terminus, the 370-residue chain is Cobalt-precorrin-5B C(1)-methyltransferase (370 aa).

The protein belongs to the CbiD family.

The catalysed reaction is Co-precorrin-5B + S-adenosyl-L-methionine = Co-precorrin-6A + S-adenosyl-L-homocysteine. It functions in the pathway cofactor biosynthesis; adenosylcobalamin biosynthesis; cob(II)yrinate a,c-diamide from sirohydrochlorin (anaerobic route): step 6/10. Catalyzes the methylation of C-1 in cobalt-precorrin-5B to form cobalt-precorrin-6A. This chain is Cobalt-precorrin-5B C(1)-methyltransferase, found in Prochlorococcus marinus (strain MIT 9215).